Consider the following 479-residue polypeptide: Dynein regulatory complex subunit 4 (479 aa).

Coiled coils occupy residues 28–93 (RDQL…LADI), 117–170 (RAEA…FNEK), and 210–347 (EVEE…GLKE).

Belongs to the DRC4 family.

It is found in the cytoplasm. The protein localises to the cytoskeleton. Its subcellular location is the flagellum basal body. In terms of biological role, cytoskeletal linker which probably functions in axonemal and non-axonemal dynein regulation. May play a role in the spermatozoa motility. In Drosophila melanogaster (Fruit fly), this protein is Dynein regulatory complex subunit 4.